The sequence spans 294 residues: Phosphoribosylaminoimidazole-succinocarboxamide synthase (294 aa).

Belongs to the SAICAR synthetase family.

The catalysed reaction is 5-amino-1-(5-phospho-D-ribosyl)imidazole-4-carboxylate + L-aspartate + ATP = (2S)-2-[5-amino-1-(5-phospho-beta-D-ribosyl)imidazole-4-carboxamido]succinate + ADP + phosphate + 2 H(+). The protein operates within purine metabolism; IMP biosynthesis via de novo pathway; 5-amino-1-(5-phospho-D-ribosyl)imidazole-4-carboxamide from 5-amino-1-(5-phospho-D-ribosyl)imidazole-4-carboxylate: step 1/2. The polypeptide is Phosphoribosylaminoimidazole-succinocarboxamide synthase (Thermoplasma volcanium (strain ATCC 51530 / DSM 4299 / JCM 9571 / NBRC 15438 / GSS1)).